We begin with the raw amino-acid sequence, 273 residues long: Small ribosomal subunit protein uS2 (273 aa).

The disordered stretch occupies residues 244–273 (SDEEANSSAEENENRQEDLLAKKYDSSEAN). Residues 255-273 (NENRQEDLLAKKYDSSEAN) show a composition bias toward basic and acidic residues.

It belongs to the universal ribosomal protein uS2 family.

The polypeptide is Small ribosomal subunit protein uS2 (Chlamydia felis (strain Fe/C-56) (Chlamydophila felis)).